The chain runs to 806 residues: DNA topoisomerase 1 (806 aa).

Residues 1-15 (MSVVSNHHSNGNGNS) are compositionally biased toward low complexity. Residues 1–236 (MSVVSNHHSN…KKEPPKKKVK (236 aa)) form a disordered region. The span at 24–34 (DEIKKEVKDEP) shows a compositional bias: basic and acidic residues. 2 stretches are compositionally biased toward basic residues: residues 49–60 (RDKKEKKQKKRK) and 98–108 (EKKKSKKNNKK). Residues 113 to 127 (SSEDDDEESEGDVSE) are compositionally biased toward acidic residues. A compositionally biased stretch (basic and acidic residues) spans 128–137 (EDVKPQIHSD). The segment covering 138–153 (DELEEEDEAPTTDDEE) has biased composition (acidic residues). Basic residues predominate over residues 159-176 (EKERRKKEKREKKERKEK). A compositionally biased stretch (basic and acidic residues) spans 177–188 (KRLEKENRKIKE). The span at 189-199 (EDDEDSDDEDD) shows a compositional bias: acidic residues. Over residues 210 to 229 (KGAEKSKPSTSKKDAGGKKE) the composition is skewed to basic and acidic residues. Interaction with DNA regions lie at residues 467–468 (KY), 530–535 (RAGNEK), and 634–636 (TVK). The 330-residue stretch at 474 to 803 (SSKIKGEKDF…IDMTNSSDEE (330 aa)) folds into the Topo IB-type catalytic domain. Y761 (O-(3'-phospho-DNA)-tyrosine intermediate) is an active-site residue.

Belongs to the type IB topoisomerase family. As to expression, expressed in male germ cells and in mature sperm.

Its subcellular location is the nucleus. The protein localises to the nucleolus. It localises to the chromosome. The catalysed reaction is ATP-independent breakage of single-stranded DNA, followed by passage and rejoining.. Releases the supercoiling and torsional tension of DNA introduced during the DNA replication and transcription by transiently cleaving and rejoining one strand of the DNA duplex. Introduces a single-strand break via transesterification at a target site in duplex DNA. The scissile phosphodiester is attacked by the catalytic tyrosine of the enzyme, resulting in the formation of a DNA-(3'-phosphotyrosyl)-enzyme intermediate and the expulsion of a 5'-OH DNA strand. The free DNA strand then rotates around the intact phosphodiester bond on the opposing strand, thus removing DNA supercoils. Finally, in the religation step, the DNA 5'-OH attacks the covalent intermediate to expel the active-site tyrosine and restore the DNA phosphodiester backbone. Required for normal spermatogenesis and oogenesis. The protein is DNA topoisomerase 1 (top-1) of Caenorhabditis elegans.